A 172-amino-acid polypeptide reads, in one-letter code: Protein-export protein SecB (172 aa).

It belongs to the SecB family. As to quaternary structure, homotetramer, a dimer of dimers. One homotetramer interacts with 1 SecA dimer.

The protein resides in the cytoplasm. Its function is as follows. One of the proteins required for the normal export of preproteins out of the cell cytoplasm. It is a molecular chaperone that binds to a subset of precursor proteins, maintaining them in a translocation-competent state. It also specifically binds to its receptor SecA. This is Protein-export protein SecB from Dinoroseobacter shibae (strain DSM 16493 / NCIMB 14021 / DFL 12).